A 2890-amino-acid polypeptide reads, in one-letter code: Bifunctional DNA-directed RNA polymerase subunit beta-beta' (2890 aa).

Residues 1-1377 are DNA-directed RNA polymerase subunit beta; it reads MSKKIPLKNR…DINIFGDEMD (1377 aa). The interval 1384-2890 is DNA-directed RNA polymerase subunit beta'; sequence PIVIKEDDRP…LRTIEDSPKI (1507 aa). Zn(2+)-binding residues include Cys1449, Cys1451, Cys1465, and Cys1468. The Mg(2+) site is built by Asp1849, Asp1851, and Asp1853. Residues Cys2179, Cys2253, Cys2260, and Cys2263 each coordinate Zn(2+).

It in the N-terminal section; belongs to the RNA polymerase beta chain family. The protein in the C-terminal section; belongs to the RNA polymerase beta' chain family. In terms of assembly, the RNAP catalytic core consists of 2 alpha, 1 beta/beta' and 1 omega subunit. When a sigma factor is associated with the core the holoenzyme is formed, which can initiate transcription. It depends on Mg(2+) as a cofactor. Requires Zn(2+) as cofactor.

The enzyme catalyses RNA(n) + a ribonucleoside 5'-triphosphate = RNA(n+1) + diphosphate. Its function is as follows. DNA-dependent RNA polymerase catalyzes the transcription of DNA into RNA using the four ribonucleoside triphosphates as substrates. This is Bifunctional DNA-directed RNA polymerase subunit beta-beta' (rpoBC) from Helicobacter acinonychis (strain Sheeba).